The primary structure comprises 278 residues: Manganese import system permease protein ScaB (278 aa).

Transmembrane regions (helical) follow at residues 18–38, 40–60, 61–81, 136–156, 172–192, 194–214, 220–240, and 244–264; these read ALIT…FIIL, GMSL…ALSF, ILGI…SILI, VTIG…RPLL, VKLY…TAMQ, VGTI…YLYA, MMLL…FIGY, and IAVG…SFFI.

The protein belongs to the ABC-3 integral membrane protein family.

The protein resides in the cell membrane. Its function is as follows. Part of an ABC transporter complex involved in manganese import. In Streptococcus pneumoniae, this protein is Manganese import system permease protein ScaB.